The following is a 129-amino-acid chain: Serum amyloid A-2 protein (129 aa).

An N-terminal signal peptide occupies residues 1 to 18; that stretch reads MKLFTGLIFCSLVLGVHS. A Pyrrolidone carboxylic acid modification is found at Gln19. Residues 90–103 are compositionally biased toward basic and acidic residues; it reads KHGDSGHGVEDSRA. Positions 90–129 are disordered; that stretch reads KHGDSGHGVEDSRADQAANEWGRSGKDPNHFRPPGLPDKY.

This sequence belongs to the SAA family. As to quaternary structure, apolipoprotein of the HDL complex.

Its subcellular location is the secreted. In terms of biological role, major acute phase reactant. The protein is Serum amyloid A-2 protein of Sus scrofa (Pig).